We begin with the raw amino-acid sequence, 510 residues long: NAD(P)H-quinone oxidoreductase subunit 2, chloroplastic (510 aa).

Helical transmembrane passes span 24–44, 59–79, 99–119, 124–144, 149–169, 183–203, 295–315, 323–343, 347–367, 395–415, and 418–438; these read LLLF…GLIL, WFYF…LFRW, IFQF…VEYI, MAIT…MFLC, LITI…LSGY, YLLM…WLYG, WHLL…LIAI, MLAY…IVGD, GYAS…GTFA, ALSS…AGFF, and LHLF…IGLL.

This sequence belongs to the complex I subunit 2 family. In terms of assembly, NDH is composed of at least 16 different subunits, 5 of which are encoded in the nucleus.

It localises to the plastid. It is found in the chloroplast thylakoid membrane. The enzyme catalyses a plastoquinone + NADH + (n+1) H(+)(in) = a plastoquinol + NAD(+) + n H(+)(out). It catalyses the reaction a plastoquinone + NADPH + (n+1) H(+)(in) = a plastoquinol + NADP(+) + n H(+)(out). Its function is as follows. NDH shuttles electrons from NAD(P)H:plastoquinone, via FMN and iron-sulfur (Fe-S) centers, to quinones in the photosynthetic chain and possibly in a chloroplast respiratory chain. The immediate electron acceptor for the enzyme in this species is believed to be plastoquinone. Couples the redox reaction to proton translocation, and thus conserves the redox energy in a proton gradient. The protein is NAD(P)H-quinone oxidoreductase subunit 2, chloroplastic of Maianthemum racemosum (False Solomon's-seal).